The primary structure comprises 341 residues: Cell division protein FtsX (341 aa).

Residues 1 to 34 (MSTTRTPKVSERVAPKPADPQPAKKKRGEDDDGP) are disordered. Residues 1-65 (MSTTRTPKVS…RRLGKQPIGS (65 aa)) are Cytoplasmic-facing. A helical membrane pass occupies residues 66–86 (FFTCLVMAVALSMPMGLSLLL). Residues 87–212 (KNIEQLGGSW…LAAILKLGDR (126 aa)) are Periplasmic-facing. The helical transmembrane segment at 213–233 (FVFGLAVMLISALLLVIGNTI) threads the bilayer. The Cytoplasmic portion of the chain corresponds to 234 to 263 (RLHIENRRIEIEVIKLVGGTDAYVRRPFLY). A helical transmembrane segment spans residues 264–284 (MGALYGLGAGLLAWGILAFGL). Residues 285–311 (NWLNEAVVGLSGLYGSDFALGGVPASD) are Periplasmic-facing. Residues 312–332 (GLSLLIGAVLLGYIGAWIAVA) form a helical membrane-spanning segment. The Cytoplasmic segment spans residues 333–341 (RHLNELAPR).

It belongs to the ABC-4 integral membrane protein family. FtsX subfamily. In terms of assembly, forms a membrane-associated complex with FtsE.

Its subcellular location is the cell inner membrane. Its function is as follows. Part of the ABC transporter FtsEX involved in cellular division. This chain is Cell division protein FtsX, found in Pseudomonas putida (Arthrobacter siderocapsulatus).